The chain runs to 60 residues: Toxin 4.9.6 (60 aa).

4 disulfides stabilise this stretch: Cys3/Cys22, Cys17/Cys38, Cys40/Cys52, and Cys53/Cys58.

This sequence belongs to the three-finger toxin family. Short-chain subfamily. Orphan group XI sub-subfamily. Expressed by the venom gland.

It is found in the secreted. This Dendroaspis viridis (Western green mamba) protein is Toxin 4.9.6.